Reading from the N-terminus, the 183-residue chain is Acidic proline-rich protein HP43A (183 aa).

The signal sequence occupies residues 1–14; that stretch reads MLVVLLTAALLAEH. Positions 22 to 183 are disordered; sequence ISQLSEEEQQ…QGSEEQSTSL (162 aa). The segment covering 52–65 has biased composition (acidic residues); that stretch reads SDEEGDDDGEEDGN. A run of 5 repeats spans residues 81–100, 101–120, 121–140, 141–160, and 161–180. Positions 86-183 are enriched in low complexity; sequence GNQQGPPQQE…QGSEEQSTSL (98 aa).

It localises to the secreted. The polypeptide is Acidic proline-rich protein HP43A (H29) (Mesocricetus auratus (Golden hamster)).